The sequence spans 67 residues: Large ribosomal subunit protein bL35 (67 aa).

The segment covering 1-11 (MPKLKTRKAAA) has biased composition (basic residues). The tract at residues 1-22 (MPKLKTRKAAAKRFEATGSGKK) is disordered.

Belongs to the bacterial ribosomal protein bL35 family.

This Microcystis aeruginosa (strain NIES-843 / IAM M-2473) protein is Large ribosomal subunit protein bL35.